We begin with the raw amino-acid sequence, 197 residues long: Peptidyl-tRNA hydrolase (197 aa).

Tyrosine 18 lines the tRNA pocket. The Proton acceptor role is filled by histidine 23. Residues phenylalanine 69, asparagine 71, and asparagine 117 each contribute to the tRNA site.

It belongs to the PTH family. As to quaternary structure, monomer.

It localises to the cytoplasm. It catalyses the reaction an N-acyl-L-alpha-aminoacyl-tRNA + H2O = an N-acyl-L-amino acid + a tRNA + H(+). In terms of biological role, hydrolyzes ribosome-free peptidyl-tRNAs (with 1 or more amino acids incorporated), which drop off the ribosome during protein synthesis, or as a result of ribosome stalling. Catalyzes the release of premature peptidyl moieties from peptidyl-tRNA molecules trapped in stalled 50S ribosomal subunits, and thus maintains levels of free tRNAs and 50S ribosomes. This is Peptidyl-tRNA hydrolase from Tolumonas auensis (strain DSM 9187 / NBRC 110442 / TA 4).